The sequence spans 501 residues: ATP synthase subunit alpha (501 aa).

ATP is bound at residue 169–176; that stretch reads GDRQTGKT.

It belongs to the ATPase alpha/beta chains family. As to quaternary structure, F-type ATPases have 2 components, CF(1) - the catalytic core - and CF(0) - the membrane proton channel. CF(1) has five subunits: alpha(3), beta(3), gamma(1), delta(1), epsilon(1). CF(0) has three main subunits: a(1), b(2) and c(9-12). The alpha and beta chains form an alternating ring which encloses part of the gamma chain. CF(1) is attached to CF(0) by a central stalk formed by the gamma and epsilon chains, while a peripheral stalk is formed by the delta and b chains.

It localises to the cell membrane. The enzyme catalyses ATP + H2O + 4 H(+)(in) = ADP + phosphate + 5 H(+)(out). Functionally, produces ATP from ADP in the presence of a proton gradient across the membrane. The alpha chain is a regulatory subunit. The protein is ATP synthase subunit alpha of Streptococcus gordonii (strain Challis / ATCC 35105 / BCRC 15272 / CH1 / DL1 / V288).